A 142-amino-acid chain; its full sequence is Nitrogen fixation protein NifU 2 (142 aa).

Positions 1–36 are disordered; it reads MKDLFDESLTLDTGSAAPGTAPGRPRRRQPAGGKAP. The segment covering 14–23 has biased composition (low complexity); sequence GSAAPGTAPG.

It belongs to the NifU family.

May be involved in the formation or repair of [Fe-S] clusters present in iron-sulfur proteins. The protein is Nitrogen fixation protein NifU 2 (nifU2) of Rhodobacter capsulatus (Rhodopseudomonas capsulata).